A 565-amino-acid polypeptide reads, in one-letter code: Urocanate hydratase (565 aa).

NAD(+)-binding positions include Gly-61–Gly-62, Gln-139, Gly-185–Gly-187, Glu-205, Arg-210, Asn-251–Ala-252, Gln-272–His-276, Tyr-282–Leu-283, and Tyr-331. Residue Cys-419 is part of the active site. Positions Leu-453–Ser-472 are disordered. The span at Arg-463–Ser-472 shows a compositional bias: basic and acidic residues. Position 501 (Gly-501) interacts with NAD(+).

The protein belongs to the urocanase family. NAD(+) serves as cofactor.

The protein resides in the cytoplasm. The enzyme catalyses 4-imidazolone-5-propanoate = trans-urocanate + H2O. Its pathway is amino-acid degradation; L-histidine degradation into L-glutamate; N-formimidoyl-L-glutamate from L-histidine: step 2/3. Catalyzes the conversion of urocanate to 4-imidazolone-5-propionate. This is Urocanate hydratase from Pseudomonas syringae pv. tomato (strain ATCC BAA-871 / DC3000).